A 78-amino-acid polypeptide reads, in one-letter code: Translation initiation factor IF-1 (78 aa).

Residues 4–78 (KFNNQAKQDK…LKLGRIIGRK (75 aa)) enclose the S1-like domain.

The protein belongs to the IF-1 family. In terms of assembly, component of the 30S ribosomal translation pre-initiation complex which assembles on the 30S ribosome in the order IF-2 and IF-3, IF-1 and N-formylmethionyl-tRNA(fMet); mRNA recruitment can occur at any time during PIC assembly.

The protein localises to the cytoplasm. In terms of biological role, one of the essential components for the initiation of protein synthesis. Stabilizes the binding of IF-2 and IF-3 on the 30S subunit to which N-formylmethionyl-tRNA(fMet) subsequently binds. Helps modulate mRNA selection, yielding the 30S pre-initiation complex (PIC). Upon addition of the 50S ribosomal subunit IF-1, IF-2 and IF-3 are released leaving the mature 70S translation initiation complex. The sequence is that of Translation initiation factor IF-1 from Mycoplasma pneumoniae (strain ATCC 29342 / M129 / Subtype 1) (Mycoplasmoides pneumoniae).